We begin with the raw amino-acid sequence, 118 residues long: uncharacterized protein (118 aa).

The protein belongs to the Lactobacillus delbrueckii bacteriophages ORF5 protein family.

This is an uncharacterized protein from Lactobacillus delbrueckii (Lactococcus delbrueckii bacteriophage LL-H).